The chain runs to 1008 residues: Histone deacetylase complex subunit SAP130-A (1008 aa).

Positions 1–31 are enriched in polar residues; sequence MNSQQFPRQAASMPSPQVSNSGASVGQNVQG. Disordered stretches follow at residues 1 to 44, 113 to 134, 415 to 435, and 617 to 720; these read MNSQ…DVQS, SKSTMPSRPIAPAPPSAMSAVP, IQSDYGTERGNLIPIPGHRAS, and TPGG…PATI. Over residues 35 to 44 the composition is skewed to basic and acidic residues; that stretch reads EVARDMDVQS. Positions 618–644 are enriched in polar residues; that stretch reads PGGTTVMQSHSQSPGIGSSPAQGSSPR. Residues 678-697 are compositionally biased toward low complexity; that stretch reads ADQPSAAASLPSSHHPAAAV.

The protein belongs to the SAP130 family.

Its subcellular location is the nucleus. Its function is as follows. Acts as a transcriptional repressor. The protein is Histone deacetylase complex subunit SAP130-A (sap130-a) of Xenopus laevis (African clawed frog).